The sequence spans 313 residues: Malate dehydrogenase (313 aa).

NAD(+)-binding positions include 8-13 (GAGNVG) and D33. Substrate-binding residues include R83 and R89. NAD(+) contacts are provided by residues N96 and 119 to 121 (ISN). Positions 121 and 152 each coordinate substrate. Residue H176 is the Proton acceptor of the active site.

This sequence belongs to the LDH/MDH superfamily. MDH type 3 family.

The catalysed reaction is (S)-malate + NAD(+) = oxaloacetate + NADH + H(+). In terms of biological role, catalyzes the reversible oxidation of malate to oxaloacetate. The sequence is that of Malate dehydrogenase from Parabacteroides distasonis (strain ATCC 8503 / DSM 20701 / CIP 104284 / JCM 5825 / NCTC 11152).